Reading from the N-terminus, the 255-residue chain is U2 small nuclear ribonucleoprotein A' (255 aa).

4 LRR repeats span residues 20–41 (RDRE…GATL), 43–64 (QFDA…PLLR), 65–86 (RLKT…LDQA), and 89–110 (CLTE…DPLA). Residues 123–161 (NPVTNKKHYRLYVIYKVPQVRVLDFQKVKLKERQEAEKM) form the LRRCT domain. At K172 the chain carries N6-acetyllysine; alternate. K172 participates in a covalent cross-link: Glycyl lysine isopeptide (Lys-Gly) (interchain with G-Cter in SUMO2); alternate. Phosphoserine is present on residues S178 and S197. The interval 179–199 (KTFNPGAGLPTDKKKGGPSAG) is disordered. Residue K221 forms a Glycyl lysine isopeptide (Lys-Gly) (interchain with G-Cter in SUMO2) linkage. The interval 222–255 (GLLQSGQIPGRERRSGPSDEGEEEIEDDTVTNGS) is disordered. 2 positions are modified to phosphoserine: S236 and S255. The segment covering 240 to 255 (DEGEEEIEDDTVTNGS) has biased composition (acidic residues).

The protein belongs to the U2 small nuclear ribonucleoprotein A family. Identified in the spliceosome B complex. Identified in the spliceosome C complex. Found in a pre-mRNA splicing complex with SFRS4, SFRS5, SNRNP70, SNRPA1, SRRM1 and SRRM2. Found in a pre-mRNA exonic splicing enhancer (ESE) complex with SNRNP70, SNRPA1, SRRM1 and TRA2B. Contributes to the binding of stem loop IV of U2 snRNA with SNRPB2.

The protein resides in the nucleus. Its function is as follows. Involved in pre-mRNA splicing as component of the spliceosome. Associated with sn-RNP U2, where it contributes to the binding of stem loop IV of U2 snRNA. This chain is U2 small nuclear ribonucleoprotein A' (Snrpa1), found in Mus musculus (Mouse).